A 135-amino-acid polypeptide reads, in one-letter code: Allatotropins (135 aa).

The signal sequence occupies residues 1–22; that stretch reads MNFSMHLVLAVAAAACLCVVTA. Residue Phe-51 is modified to Phenylalanine amide. A propeptide spanning residues 55–135 is cleaved from the precursor; the sequence is DRPHTRAELY…SSEELLRNVA (81 aa).

As to expression, allatotropin: Expressed in corpora cardiaca (CC), corpora allata (CA), antennal lobe (AL) and gnathal ganglion (GNG) (protein level). Expression in AL detected in all animals, expression in GNG detected in most animals and expression in CA and CC detected in few animals (at protein level). Allatotropin-PP-1: Expressed in corpora cardiaca (CC), corpora allata (CA), antennal lobe (AL) and gnathal ganglion (GNG) (at protein level). Expression in AL detected in all animals and expression in GNG, CA and CC detected in some animals (at protein level).

It localises to the secreted. In terms of biological role, neuropeptide stimulator of juvenile hormone synthesis. The polypeptide is Allatotropins (Agrotis ipsilon (Black cutworm moth)).